The following is a 1958-amino-acid chain: Echinoderm microtubule-associated protein-like 6 (1958 aa).

10 WD repeats span residues Gly59–Leu100, Val104–Ser145, Gly148–Lys187, Gly195–Gln233, Ala235–Asp273, Gly280–Gln321, His323–Arg362, Asn364–His403, Asp406–Gly445, and Gly561–Gly601. Positions Leu603–Val626 are disordered. Positions Tyr615–Val626 are enriched in acidic residues. 10 WD repeats span residues Gly725–Leu766, Gln770–Thr811, Gly814–Lys853, Gly861–Lys900, Ala901–Ala940, His996–Ala1035, Lys1038–Ser1077, His1080–Ile1120, Ser1191–Arg1230, and Gly1236–Ser1276. Residues Lys1322–Pro1337 are compositionally biased toward basic and acidic residues. The tract at residues Lys1322–Ile1353 is disordered. 10 WD repeats span residues Glu1412 to Met1456, Phe1460 to Ser1501, Gly1504 to Lys1543, Ala1553 to Ala1591, Ala1593 to Phe1638, His1685 to Lys1724, Ser1726 to Arg1767, Asp1768 to Arg1807, Ala1880 to Lys1919, and Gly1925 to Leu1958.

The protein belongs to the WD repeat EMAP family.

It localises to the cytoplasm. Its subcellular location is the cytoskeleton. In terms of biological role, may modify the assembly dynamics of microtubules, such that microtubules are slightly longer, but more dynamic. The polypeptide is Echinoderm microtubule-associated protein-like 6 (EML6) (Homo sapiens (Human)).